The chain runs to 175 residues: Ribosome maturation factor RimM (175 aa).

The 80-residue stretch at 96 to 175 folds into the PRC barrel domain; sequence EEDYYWHDLI…TITVDWDAGF (80 aa).

This sequence belongs to the RimM family. In terms of assembly, binds ribosomal protein uS19.

It localises to the cytoplasm. In terms of biological role, an accessory protein needed during the final step in the assembly of 30S ribosomal subunit, possibly for assembly of the head region. Essential for efficient processing of 16S rRNA. May be needed both before and after RbfA during the maturation of 16S rRNA. It has affinity for free ribosomal 30S subunits but not for 70S ribosomes. This is Ribosome maturation factor RimM from Haemophilus ducreyi (strain 35000HP / ATCC 700724).